The primary structure comprises 72 residues: Translation initiation factor IF-1 (72 aa).

One can recognise an S1-like domain in the interval 1–72; that stretch reads MSKEELIEFE…TKGRITYRFK (72 aa).

This sequence belongs to the IF-1 family. In terms of assembly, component of the 30S ribosomal translation pre-initiation complex which assembles on the 30S ribosome in the order IF-2 and IF-3, IF-1 and N-formylmethionyl-tRNA(fMet); mRNA recruitment can occur at any time during PIC assembly.

Its subcellular location is the cytoplasm. One of the essential components for the initiation of protein synthesis. Stabilizes the binding of IF-2 and IF-3 on the 30S subunit to which N-formylmethionyl-tRNA(fMet) subsequently binds. Helps modulate mRNA selection, yielding the 30S pre-initiation complex (PIC). Upon addition of the 50S ribosomal subunit IF-1, IF-2 and IF-3 are released leaving the mature 70S translation initiation complex. This Hyphomonas neptunium (strain ATCC 15444) protein is Translation initiation factor IF-1.